The following is a 333-amino-acid chain: GTPase Obg (333 aa).

Residues 1–159 (MKFIDEATIT…ATVRLELKLL (159 aa)) form the Obg domain. A disordered region spans residues 63–85 (KQFAAPNGAPGEGRQKTGKSGDD). Residues 75 to 84 (GRQKTGKSGD) show a composition bias toward basic and acidic residues. The region spanning 160 to 329 (ADVGLIGLPN…LKKHLFELLC (170 aa)) is the OBG-type G domain. GTP-binding positions include 166–173 (GLPNAGKS), 191–195 (FTTLS), 213–216 (DIPG), 283–286 (NKMD), and 310–312 (SAA). Serine 173 and threonine 193 together coordinate Mg(2+).

It belongs to the TRAFAC class OBG-HflX-like GTPase superfamily. OBG GTPase family. In terms of assembly, monomer. Mg(2+) is required as a cofactor.

The protein localises to the cytoplasm. An essential GTPase which binds GTP, GDP and possibly (p)ppGpp with moderate affinity, with high nucleotide exchange rates and a fairly low GTP hydrolysis rate. Plays a role in control of the cell cycle, stress response, ribosome biogenesis and in those bacteria that undergo differentiation, in morphogenesis control. The polypeptide is GTPase Obg (Desulfosudis oleivorans (strain DSM 6200 / JCM 39069 / Hxd3) (Desulfococcus oleovorans)).